The following is a 38-amino-acid chain: Mu/omega-theraphotoxin-Mb1b (38 aa).

Disulfide bonds link C7–C21, C14–C26, and C20–C33. At S38 the chain carries Serine amide.

The protein belongs to the neurotoxin 10 (Hwtx-1) family. 28 (Jztx-11) subfamily. Expressed by the venom gland.

Its subcellular location is the secreted. Its function is as follows. Paralytic toxin on insects that inhibits voltage-gated sodium (Nav) and calcium (Cav) channels in P.americana (American cockroach) dorsal unpaired median (DUM) neurons, and also inhibits the B.germanica (German cockroach) Nav channel (BgNaV1). May act as a gating-modifier toxin on Nav and as a pore blocker on Cav. In vivo, reversibly paralyzes both L.cuprina (Australian sheep blowfly) and M.domestica (housefly), but does not affect larvae of H.armigera (cotton bollworms). In Monocentropus balfouri (Socotra Island blue baboon tarantula), this protein is Mu/omega-theraphotoxin-Mb1b.